Reading from the N-terminus, the 437-residue chain is MATFQSLPGFREFYPDALARRNHIFRLWRQTAVAFGFAEYDAPVLEPLELYKTKSGDEIEAQLFSFTDKGGREVALRPEMTPTVCRMVGAKANALKRPIKWFSIAEYYRYERAQKGRERAFFQFNADLFAEPGPEAEIELIALLTQCLKAFGLTEQDFYIRLSDRNLWFFYLEALGLDEPRIRAVLSAVDKFEKVGDDAFKPYAEQFGPLDLALKQRVLEFLQIKTLASLEQTLAPLGGEKLAARLGDWRKLLDGLAAMGLSPFIEVDLGVVRGLAYYTGFVFEAFDRKGELRAIAGGGRYNDLVKKLGGPDLPAVGFAIGDVTLGLLLDARGLMPAFVQASDVYCVIGGAAERQAAFADVNALRAAGFKVDYPLKDVPFGKQFKLAADSGAKLALIYGPDELAKNVVKLRDLTTRTETDVPREQVQAMVRDFFSTD.

The protein belongs to the class-II aminoacyl-tRNA synthetase family. As to quaternary structure, homodimer.

It localises to the cytoplasm. The enzyme catalyses tRNA(His) + L-histidine + ATP = L-histidyl-tRNA(His) + AMP + diphosphate + H(+). This Opitutus terrae (strain DSM 11246 / JCM 15787 / PB90-1) protein is Histidine--tRNA ligase.